The following is a 569-amino-acid chain: MATDIATRELRKPVDVAEYLFRRLHEVGIRSVHGVPGDYNLAALDYLPKCGLHWVGNCNELNAGYAADGYARVNGISALITTFGVGELSAINAIAGAYSEFVPIVHIVGQPHTRSQRDGMLLHHTLGNGDYNVFARMNAGVSTTVGRLNDTHEVATLIDNAIRECWIRSRPVYITLPTDMVTKKIEGERLNTPIDLSLPANDPEKEDYVVDVVLKYLHAAQRPVILVDACAIRHKVLQEVHDLMEASGLPTFVAPMGKGAVDETHKNYGGVYAGDGSNTGVREQVESSDLILSIGAIKSDFNTAGFTYRIGQLNTIDFHSTYVRVRYSEYPDINMKGVLRKVIQKLGRVNAQPVPHLSNNLPDDEPKSGDQPITHRWFWPKIGQWLKENDIVITETGTANFGIWETRFPAGVTAISQVLWGSIGYSVGACQGAALAAKEQGNRRTILFVGDGSIQLTLQEISTMIRNKLNPIIFVICNEGYTIERYIHGWEASYNDIQQWDYKSLPVAFGAGKDYKGYRVKTKDDMIKLFENTEFASAPFLQLVELYMPREDAPSALKLTAEAAASRNK.

Residues aspartate 38 and histidine 124 each coordinate pyruvate. Residues threonine 398 and 421 to 423 each bind thiamine diphosphate; that span reads GSI. Aspartate 451 serves as a coordination point for Mg(2+). Residues 452-453 and 478-483 contribute to the thiamine diphosphate site; these read GS and NEGYTI. Residues asparagine 478 and glycine 480 each contribute to the Mg(2+) site. Pyruvate is bound at residue glutamate 484.

This sequence belongs to the TPP enzyme family. Homotetramer. The cofactor is Mg(2+). Thiamine diphosphate serves as cofactor.

It catalyses the reaction a 2-oxocarboxylate + H(+) = an aldehyde + CO2. It carries out the reaction pyruvate + H(+) = acetaldehyde + CO2. This chain is Pyruvate decarboxylase (pdcA), found in Aspergillus fumigatus (strain ATCC MYA-4609 / CBS 101355 / FGSC A1100 / Af293) (Neosartorya fumigata).